Consider the following 392-residue polypeptide: Pyruvate synthase subunit PorA (392 aa).

As to quaternary structure, heterotetramer of one alpha, one beta, one delta and one gamma chain.

It carries out the reaction 2 oxidized [2Fe-2S]-[ferredoxin] + pyruvate + CoA = 2 reduced [2Fe-2S]-[ferredoxin] + acetyl-CoA + CO2 + H(+). In Thermotoga maritima (strain ATCC 43589 / DSM 3109 / JCM 10099 / NBRC 100826 / MSB8), this protein is Pyruvate synthase subunit PorA (porA).